We begin with the raw amino-acid sequence, 129 residues long: uncharacterized protein (129 aa).

3 consecutive transmembrane segments (helical) span residues Leu-22–Phe-42, Val-55–Phe-75, and Leu-88–Phe-108.

It localises to the membrane. This is an uncharacterized protein from Saccharomyces cerevisiae (strain ATCC 204508 / S288c) (Baker's yeast).